The following is a 402-amino-acid chain: MAVVATLRLSAQGTVTFEDVAVKFTQEEWNLLSEAQRCLYRDVTLENLALMSSLGCWCGVEDEAAPSKQSIYIQRETQVRTPVTGVSPKKAHPCEMCGPILGDILHVADHQGTHHKQKLHRCEAWGNKLYDSGNFHQHQNEHIGEKPYRGSVEEALFVKRCKLHVSGESSVFSESGKDFLPRSGLLQQEASHTGEKSNSKTECVSPFQCGGAHYSHGDSMKHFSTKHILSQHQRLLPREECYVCCECGKSFSKYVSFSNHQRVHSGKRPYECGECEKSFSQKSSLIQHQQFHTGGKPYGCEECGKYFSLEGYLRRHQKVHAGKGPYECGECGKSFSSNVNLKSHQRIHTGERPYKCGECEKSFSRKPSLSYHQRFGRPRWVDHKDRKEFKTSLGNIVKSCLF.

The 77-residue stretch at 15-91 (VTFEDVAVKF…PVTGVSPKKA (77 aa)) folds into the KRAB domain. Residues 92-114 (HPCEMCGPILGDILHVADHQGTH) form a C2H2-type 1 zinc finger. A C2H2-type 2; degenerate zinc finger spans residues 120–142 (HRCEAWGNKLYDSGNFHQHQNEH). Residues lysine 177, lysine 200, and lysine 253 each participate in a glycyl lysine isopeptide (Lys-Gly) (interchain with G-Cter in SUMO2) cross-link. 5 consecutive C2H2-type zinc fingers follow at residues 242–264 (YVCC…QRVH), 270–292 (YECG…QQFH), 298–320 (YGCE…QKVH), 326–348 (YECG…QRIH), and 354–383 (YKCG…WVDH). Lysine 366 participates in a covalent cross-link: Glycyl lysine isopeptide (Lys-Gly) (interchain with G-Cter in SUMO2).

The protein belongs to the krueppel C2H2-type zinc-finger protein family.

The protein localises to the nucleus. Functionally, may be involved in transcriptional regulation. In Homo sapiens (Human), this protein is Zinc finger protein 587B (ZNF587B).